Reading from the N-terminus, the 667-residue chain is tRNA 5-methylaminomethyl-2-thiouridine biosynthesis bifunctional protein MnmC (667 aa).

The interval 1 to 215 is tRNA (mnm(5)s(2)U34)-methyltransferase; the sequence is MKFINGILFN…KREMIRAYFN (215 aa). An FAD-dependent cmnm(5)s(2)U34 oxidoreductase region spans residues 240–667; that stretch reads IGAGIAGIVT…LIRKLKKGLK (428 aa).

The protein in the N-terminal section; belongs to the methyltransferase superfamily. tRNA (mnm(5)s(2)U34)-methyltransferase family. It in the C-terminal section; belongs to the DAO family. FAD serves as cofactor.

It localises to the cytoplasm. It carries out the reaction 5-aminomethyl-2-thiouridine(34) in tRNA + S-adenosyl-L-methionine = 5-methylaminomethyl-2-thiouridine(34) in tRNA + S-adenosyl-L-homocysteine + H(+). Functionally, catalyzes the last two steps in the biosynthesis of 5-methylaminomethyl-2-thiouridine (mnm(5)s(2)U) at the wobble position (U34) in tRNA. Catalyzes the FAD-dependent demodification of cmnm(5)s(2)U34 to nm(5)s(2)U34, followed by the transfer of a methyl group from S-adenosyl-L-methionine to nm(5)s(2)U34, to form mnm(5)s(2)U34. The sequence is that of tRNA 5-methylaminomethyl-2-thiouridine biosynthesis bifunctional protein MnmC from Campylobacter hominis (strain ATCC BAA-381 / DSM 21671 / CCUG 45161 / LMG 19568 / NCTC 13146 / CH001A).